The sequence spans 252 residues: Putative zinc finger CCCH domain-containing protein 58 (252 aa).

The C3H1-type zinc finger occupies 35 to 62; it reads NHKSVLCMKWREGRCHNGVACRYAHGEE. Disordered regions lie at residues 71-95, 109-180, and 215-252; these read RVGG…SGST, RHGR…SAAD, and TATS…APPK. Composition is skewed to low complexity over residues 133–149 and 229–238; these read SARS…TTPP and ITTTTSSSTT.

This is Putative zinc finger CCCH domain-containing protein 58 from Oryza sativa subsp. japonica (Rice).